Here is a 498-residue protein sequence, read N- to C-terminus: MINKKISLGVLSILTAFSLQSVSYACTGFIIGKDLTKDGSLLYGRTEDLEPHHNKNFIVRLAKDNPAGEKWKDLSNGFEYPLPEHSYRYSAIPDVTPNKGVYDEAGFNEFGVSMSATVSASANDAIQKIDPYVKNGLAESSMTSVILPSVKTAREGVALIAKIVTEKGAAEGNIVTLADKDGIWYMEILSGHQYVAIKFPDDKYAVFPNTFYLGHVDFNDKENTIASEDVEKVAKKAKSYTEVDGKFHIAKSYNPPLNDANRSRSFSGIKSLDPDSKVTYKDSNYELLQSTDKTFSLEDAMKLQRNRFEGLDLKPLDQMALDGKGKPKSKKAVKGYAYPISNPNVMEAHIFQLKKDIPAELGGVMWLSIGSPRNAPYLPYLGNISRTYEAYQEKSTQYNDKSWYWTVSHINDLVAAHPKPFGTKVIDEMKGLEKTWIAEQDKSTKEISDLVVSDPKAAQEKADKISLDRAEKTFKRLKAIEAKLVKEKPKNKKGLNRS.

Cys26 is an active-site residue.

The protein belongs to the peptidase C69 family.

It carries out the reaction an L-aminoacyl-L-amino acid + H2O = 2 an L-alpha-amino acid. This is Probable dipeptidase B (pepDB) from Streptococcus pyogenes serotype M1.